The chain runs to 216 residues: Glycerol-3-phosphate acyltransferase (216 aa).

The next 5 helical transmembrane spans lie at 5 to 25, 70 to 90, 118 to 138, 140 to 160, and 164 to 184; these read LIALAAAAGGYLFGSIPFGLV, IAAAVFGYFLGTTAGLVAGAF, VVFWPVGLTVIATWLAMAAIF, ISSLAALAAALAAPFAALAWG, and VAIMAGLLTVLIYWLHRANIS. Basic and acidic residues predominate over residues 192 to 201; sequence PRIGGKKSET. Positions 192-216 are disordered; sequence PRIGGKKSETSADVSDGDDPDTPAT. Residues 206-216 show a composition bias toward acidic residues; sequence SDGDDPDTPAT.

This sequence belongs to the PlsY family. In terms of assembly, probably interacts with PlsX.

Its subcellular location is the cell inner membrane. The enzyme catalyses an acyl phosphate + sn-glycerol 3-phosphate = a 1-acyl-sn-glycero-3-phosphate + phosphate. It functions in the pathway lipid metabolism; phospholipid metabolism. In terms of biological role, catalyzes the transfer of an acyl group from acyl-phosphate (acyl-PO(4)) to glycerol-3-phosphate (G3P) to form lysophosphatidic acid (LPA). This enzyme utilizes acyl-phosphate as fatty acyl donor, but not acyl-CoA or acyl-ACP. In Maricaulis maris (strain MCS10) (Caulobacter maris), this protein is Glycerol-3-phosphate acyltransferase.